The chain runs to 271 residues: Thiamine thiazole synthase (271 aa).

NAD(+)-binding positions include Ser-39, 58–59, Gly-66, Val-130, and 158–160; these read ER and HVD. 2 residues coordinate Fe cation: Asp-160 and His-175. Met-225 contacts NAD(+). Residue Arg-235 coordinates glycine.

The protein belongs to the THI4 family. In terms of assembly, homooctamer; tetramer of dimers. Fe(2+) serves as cofactor.

It carries out the reaction hydrogen sulfide + glycine + NAD(+) = ADP-5-ethyl-4-methylthiazole-2-carboxylate + nicotinamide + 3 H2O + H(+). The protein operates within cofactor biosynthesis; thiamine diphosphate biosynthesis. Involved in the biosynthesis of the thiazole moiety of thiamine. Catalyzes the conversion of NAD and glycine to adenosine diphosphate 5-(2-hydroxyethyl)-4-methylthiazole-2-carboxylate (ADT), an adenylated thiazole intermediate, using free sulfide as a source of sulfur. This chain is Thiamine thiazole synthase, found in Metallosphaera sedula (strain ATCC 51363 / DSM 5348 / JCM 9185 / NBRC 15509 / TH2).